We begin with the raw amino-acid sequence, 335 residues long: ATP-dependent 6-phosphofructokinase (335 aa).

An ATP-binding site is contributed by G11. 21–25 contacts ADP; the sequence is RAVVR. ATP is bound by residues 72-73 and 102-105; these read RY and GDGS. D103 is a binding site for Mg(2+). 125–127 contacts substrate; that stretch reads TID. Catalysis depends on D127, which acts as the Proton acceptor. R154 lines the ADP pocket. Substrate is bound by residues R162 and 169 to 171; that span reads MGR. ADP-binding positions include 185–187 and 213–215; these read GAD and KKH. Substrate is bound by residues E222, R244, and 250 to 253; that span reads HIQR.

It belongs to the phosphofructokinase type A (PFKA) family. ATP-dependent PFK group I subfamily. Prokaryotic clade 'B1' sub-subfamily. In terms of assembly, homotetramer. The cofactor is Mg(2+).

It localises to the cytoplasm. It carries out the reaction beta-D-fructose 6-phosphate + ATP = beta-D-fructose 1,6-bisphosphate + ADP + H(+). The protein operates within carbohydrate degradation; glycolysis; D-glyceraldehyde 3-phosphate and glycerone phosphate from D-glucose: step 3/4. With respect to regulation, allosterically activated by ADP and other diphosphonucleosides, and allosterically inhibited by phosphoenolpyruvate. In terms of biological role, catalyzes the phosphorylation of D-fructose 6-phosphate to fructose 1,6-bisphosphate by ATP, the first committing step of glycolysis. The chain is ATP-dependent 6-phosphofructokinase from Streptococcus pneumoniae serotype 19F (strain G54).